Here is a 612-residue protein sequence, read N- to C-terminus: Large ribosomal subunit assembly factor BipA (612 aa).

In terms of domain architecture, tr-type G spans 5–200 (NDLRNIAIIA…TIIKHVPAPV (196 aa)). GTP-binding positions include 17 to 22 (DHGKTT) and 130 to 133 (NKID).

It belongs to the TRAFAC class translation factor GTPase superfamily. Classic translation factor GTPase family. BipA subfamily. Monomer.

It is found in the cytoplasm. The enzyme catalyses GTP + H2O = GDP + phosphate + H(+). A 50S ribosomal subunit assembly protein with GTPase activity, required for 50S subunit assembly at low temperatures, may also play a role in translation. Binds GTP and analogs. Binds the 70S ribosome between the 30S and 50S subunits, in a similar position as ribosome-bound EF-G; it contacts a number of ribosomal proteins, both rRNAs and the A-site tRNA. The sequence is that of Large ribosomal subunit assembly factor BipA from Bacillus subtilis (strain 168).